Consider the following 240-residue polypeptide: Probable ATP synthase 24 kDa subunit, mitochondrial (240 aa).

The transit peptide at 1–32 (MAYASRFLSRSKQLQGGLVILQQQHAIPVRAF) directs the protein to the mitochondrion. 2 stretches are compositionally biased toward basic and acidic residues: residues 210–222 (AVEA…KKEE) and 229–240 (PDVKSLDIRNFI). The tract at residues 210–240 (AVEAMESQKKKEEFQDEEMPDVKSLDIRNFI) is disordered.

Its subcellular location is the mitochondrion. The protein localises to the mitochondrion inner membrane. In terms of biological role, mitochondrial membrane ATP synthase (F(1)F(0) ATP synthase or Complex V) produces ATP from ADP in the presence of a proton gradient across the membrane which is generated by electron transport complexes of the respiratory chain. F-type ATPases consist of two structural domains, F(1) - containing the extramembraneous catalytic core and F(0) - containing the membrane proton channel, linked together by a central stalk and a peripheral stalk. During catalysis, ATP synthesis in the catalytic domain of F(1) is coupled via a rotary mechanism of the central stalk subunits to proton translocation. Part of the complex F(0) domain. In Arabidopsis thaliana (Mouse-ear cress), this protein is Probable ATP synthase 24 kDa subunit, mitochondrial.